Consider the following 394-residue polypeptide: uncharacterized protein (394 aa).

The next 8 membrane-spanning stretches (helical) occupy residues Val22–His42, Leu60–Phe80, Gly81–Ala101, Leu231–Leu251, Gly271–Pro291, Leu303–Pro323, Leu328–Leu348, and Ala355–Met375.

It is found in the cell membrane. This is an uncharacterized protein from Pseudomonas aeruginosa (strain ATCC 15692 / DSM 22644 / CIP 104116 / JCM 14847 / LMG 12228 / 1C / PRS 101 / PAO1).